A 149-amino-acid chain; its full sequence is UPF0251 protein Moth_1655 (149 aa).

The disordered stretch occupies residues 129 to 149 (AGRGPGRGRCHRHGRFGEGEH).

This sequence belongs to the UPF0251 family.

This chain is UPF0251 protein Moth_1655, found in Moorella thermoacetica (strain ATCC 39073 / JCM 9320).